The primary structure comprises 247 residues: LHFPL tetraspan subfamily member 4 protein (247 aa).

Helical transmembrane passes span Ile22–Ile42, Phe97–Phe117, Ile127–Pro147, and Ile178–Gly198.

The protein belongs to the LHFP family. As to quaternary structure, interacts with GABA(A) receptor subunits. Interacts with GABRB3. Interacts with GABRA2. Interacts with GABRG2. Interacts with GABRA1. Identified in a complex of 720 kDa composed of LHFPL4, NLGN2, GABRA1, GABRB2, GABRG2 and GABRB3. Interacts with NLGN2; leading to mutual regulation of protein level and synaptic clustering. In terms of tissue distribution, highly expressed in the brain, including the cortex, hippocampus, midbrain, olfactory bulb pona plus medulla (at protein level). Expressed in the in the cerebellar granular layer and in granular layer. Colocalized with GPHN at inhibitory synapses. Weakly expressed in heart, testis, lung, intestine, vagina, ovary and uterus.

The protein localises to the cell projection. The protein resides in the dendrite. It is found in the postsynaptic cell membrane. In terms of biological role, plays a role in the regulation of inhibitory synapse formation and function by being involved in maintening gamma-aminobutyric acid receptors (GABAARs) clustering and their associated scaffold proteins at inhibitory synaptic sites. Acts in concert with NLGN2 to recruit or stabilize GABAARs. The chain is LHFPL tetraspan subfamily member 4 protein from Mus musculus (Mouse).